The following is a 214-amino-acid chain: Adenylate kinase (214 aa).

10 to 15 (GAGKGT) is an ATP binding site. The tract at residues 30 to 59 (STGDMLRAAVKAGTPLGLEAKKVMDAGQLV) is NMP. AMP-binding positions include threonine 31, arginine 36, 57 to 59 (QLV), 85 to 88 (GFPR), and glutamine 92. Residues 122–159 (GRRVHPGSGRVYHIVFNQPKVEGKDDVTGEDLAIRPDD) are LID. Residues arginine 123 and 132 to 133 (VY) each bind ATP. Residues arginine 156 and arginine 167 each coordinate AMP. Position 200 (glutamine 200) interacts with ATP.

It belongs to the adenylate kinase family. As to quaternary structure, monomer.

Its subcellular location is the cytoplasm. The catalysed reaction is AMP + ATP = 2 ADP. It participates in purine metabolism; AMP biosynthesis via salvage pathway; AMP from ADP: step 1/1. In terms of biological role, catalyzes the reversible transfer of the terminal phosphate group between ATP and AMP. Plays an important role in cellular energy homeostasis and in adenine nucleotide metabolism. The sequence is that of Adenylate kinase from Shewanella piezotolerans (strain WP3 / JCM 13877).